The chain runs to 454 residues: NADP-specific glutamate dehydrogenase 1 (454 aa).

N-acetylserine is present on S2. Residue K110 is part of the active site. 174–203 provides a ligand contact to NAD(+); that stretch reads GVLTGKGLNWGGSLIRPEATGYGLVYYTQA. Glycyl lysine isopeptide (Lys-Gly) (interchain with G-Cter in ubiquitin) cross-links involve residues K325, K371, and K433.

The protein belongs to the Glu/Leu/Phe/Val dehydrogenases family. Homohexamer.

It catalyses the reaction L-glutamate + NADP(+) + H2O = 2-oxoglutarate + NH4(+) + NADPH + H(+). In terms of biological role, catalyzes the incorporation of an ammonium ion into alpha-ketoglutarate to form L-glutamate, the major route of assimilation of ammonia into an organic form in yeast. This chain is NADP-specific glutamate dehydrogenase 1, found in Saccharomyces cerevisiae (strain ATCC 204508 / S288c) (Baker's yeast).